A 1133-amino-acid chain; its full sequence is SH3 and PX domain-containing protein 2A (1133 aa).

The PX domain maps to 4–128 (YCVQDATVVD…RFFEARPEDV (125 aa)). The 60-residue stretch at 166-225 (MILEQYVVVSNYKKQENSELSLQAGEVVDVIEKNESGWWFVSTSEEQGWVPATYLEAQNG) folds into the SH3 1 domain. Thr-256 carries the phosphothreonine modification. Residues 266 to 325 (SREEKYVTVQPYTSQSKDEIGFEKGVTVEVIRKNLEGWWYIRYLGKEGWAPASYLKKAKD) enclose the SH3 2 domain. A phosphoserine mark is found at Ser-406 and Ser-421. 4 disordered regions span residues 415 to 446 (QRAQ…PPEP), 505 to 840 (RKKP…EWEG), 899 to 924 (NEQP…GKSD), and 941 to 964 (QSKK…SGTP). Positions 448–507 (SVEVEYYTIAEFQSCISDGISFRGGQKAEVIDKNSGGWWYVQIGEKEGWAPASYIDKRKK) constitute an SH3 3 domain. Residues 546–555 (DSPRKLKYEE) show a composition bias toward basic and acidic residues. Residues Ser-547 and Ser-567 each carry the phosphoserine modification. Residues 567–576 (SEPELSEEPV) show a composition bias toward acidic residues. The segment covering 577 to 586 (EDRASGERRP) has biased composition (basic and acidic residues). Residue Ser-593 is modified to Phosphoserine. Acidic residues predominate over residues 608-620 (SSEDVALEEETIY). Low complexity-rich tracts occupy residues 634-652 (SARG…SLSL), 658-670 (PKSG…SLLK), and 686-715 (SSAS…SKTS). Position 644 is a phosphoserine (Ser-644). Thr-731 carries the phosphothreonine modification. Phosphoserine occurs at positions 767, 769, and 819. Position 829 is a phosphothreonine (Thr-829). The SH3 4 domain occupies 840–899 (GPATSYMTCSAYQKVQDSEISFPAGVEVQVLEKQESGWWYVRFGELEGWAPSHYLVLDEN). A coiled-coil region spans residues 917 to 946 (RQNEGKSDSLEKIERRVQALNTVNQSKKAT). Residues Ser-1002, Ser-1016, Ser-1017, and Ser-1038 each carry the phosphoserine modification. Residues 1029 to 1059 (KGRLAERAASQGSDSPLLPAQRNSIPVSPVR) are disordered. The region spanning 1072–1133 (NLKDVYVSIA…VPSNYLEKKN (62 aa)) is the SH3 5 domain.

The protein belongs to the SH3PXD2 family. In terms of assembly, interacts (via N-terminus) with CYBA. Interacts with ADAM12, ADAM15 and ADAM19. Interacts with NOXO1. Interacts (via SH3 domains) with NOXA1. Interacts with FASLG. Interacts (via PX domain) with RAB40B (GTP-bound); interaction promotes invadopodia-mediated extracellular matrix degradation. In terms of processing, tyrosine phosphorylated by SRC. Phosphorylation plays a regulatory role in the protein localization. The intramolecular interaction of the PX domain with the third SH3 domain maintains the protein in the cytoplasm and phosphorylation disrupts this interaction, resulting in the redistribution of the protein from cytoplasm to the perimembrane region. Phosphorylated on serine upon DNA damage, probably by ATM or ATR. In terms of tissue distribution, found in several cancer cell lines, particularly invasive breast carcinomas and melanomas.

It is found in the cytoplasm. The protein resides in the cell projection. Its subcellular location is the podosome. Its function is as follows. Adapter protein involved in invadopodia and podosome formation, extracellular matrix degradation and invasiveness of some cancer cells. Binds matrix metalloproteinases (ADAMs), NADPH oxidases (NOXs) and phosphoinositides. Acts as an organizer protein that allows NOX1- or NOX3-dependent reactive oxygen species (ROS) generation and ROS localization. In association with ADAM12, mediates the neurotoxic effect of amyloid-beta peptide. In Homo sapiens (Human), this protein is SH3 and PX domain-containing protein 2A.